Consider the following 254-residue polypeptide: Imidazole glycerol phosphate synthase subunit HisF (254 aa).

Residues aspartate 12 and aspartate 131 contribute to the active site.

It belongs to the HisA/HisF family. As to quaternary structure, heterodimer of HisH and HisF.

The protein resides in the cytoplasm. The enzyme catalyses 5-[(5-phospho-1-deoxy-D-ribulos-1-ylimino)methylamino]-1-(5-phospho-beta-D-ribosyl)imidazole-4-carboxamide + L-glutamine = D-erythro-1-(imidazol-4-yl)glycerol 3-phosphate + 5-amino-1-(5-phospho-beta-D-ribosyl)imidazole-4-carboxamide + L-glutamate + H(+). It functions in the pathway amino-acid biosynthesis; L-histidine biosynthesis; L-histidine from 5-phospho-alpha-D-ribose 1-diphosphate: step 5/9. IGPS catalyzes the conversion of PRFAR and glutamine to IGP, AICAR and glutamate. The HisF subunit catalyzes the cyclization activity that produces IGP and AICAR from PRFAR using the ammonia provided by the HisH subunit. This chain is Imidazole glycerol phosphate synthase subunit HisF, found in Janthinobacterium sp. (strain Marseille) (Minibacterium massiliensis).